The primary structure comprises 88 residues: Small ribosomal subunit protein uS19 (88 aa).

Belongs to the universal ribosomal protein uS19 family.

In terms of biological role, protein S19 forms a complex with S13 that binds strongly to the 16S ribosomal RNA. This chain is Small ribosomal subunit protein uS19, found in Ureaplasma parvum serovar 3 (strain ATCC 27815 / 27 / NCTC 11736).